The primary structure comprises 320 residues: uncharacterized protein (320 aa).

Belongs to the NAD(P)-dependent epimerase/dehydratase family.

This is an uncharacterized protein from Staphylococcus saprophyticus subsp. saprophyticus (strain ATCC 15305 / DSM 20229 / NCIMB 8711 / NCTC 7292 / S-41).